A 102-amino-acid chain; its full sequence is uncharacterized protein (102 aa).

This is an uncharacterized protein from Schizosaccharomyces pombe (strain 972 / ATCC 24843) (Fission yeast).